The following is a 33-amino-acid chain: Brevinin-2CDYb (33 aa).

Residues Cys-27 and Cys-33 are joined by a disulfide bond.

Belongs to the frog skin active peptide (FSAP) family. Brevinin subfamily. As to expression, expressed by the skin glands.

It is found in the secreted. In terms of biological role, antimicrobial peptide. The chain is Brevinin-2CDYb from Rana dybowskii (Dybovsky's frog).